Reading from the N-terminus, the 221-residue chain is Antigenic protein SchS34 (221 aa).

N-linked (GlcNAc...) asparagine glycosylation is found at Asn27, Asn69, Asn141, and Asn215.

Expressed in the mycelium (at protein level).

Its subcellular location is the secreted. It is found in the spore. The protein resides in the spore wall. The protein localises to the cytoplasm. The sequence is that of Antigenic protein SchS34 from Stachybotrys chartarum (Toxic black mold).